Consider the following 569-residue polypeptide: 4-coumarate-CoA ligase 2 (569 aa).

Positions 1–24 (MITIAESHPQIHHSPPDTTAPSTP) are disordered. ATP contacts are provided by residues 216–220 (SSGTT), His-265, 337–339 (AAP), 359–360 (QG), Thr-364, Asp-448, Arg-463, and Lys-554. The segment at 290-359 (EMEGMLETIQ…GRLPQAVLGQ (70 aa)) is SBD1. An SBD2 region spans residues 360 to 427 (GYGMTEAGPV…VRGPQIMKGY (68 aa)).

Belongs to the ATP-dependent AMP-binding enzyme family. As to expression, mostly expressed in stems, and, to a lower extent, in bulbs.

It catalyses the reaction (E)-4-coumarate + ATP + CoA = (E)-4-coumaroyl-CoA + AMP + diphosphate. It participates in phytoalexin biosynthesis; 3,4',5-trihydroxystilbene biosynthesis; 3,4',5-trihydroxystilbene from trans-4-coumarate: step 1/2. Functionally, produces CoA thioesters of a variety of hydroxy- and methoxy-substituted cinnamic acids, which are used to synthesize several phenylpropanoid-derived compounds, including anthocyanins, flavonoids, isoflavonoids, coumarins, lignin, suberin and wall-bound phenolics. In Narcissus pseudonarcissus (Daffodil), this protein is 4-coumarate-CoA ligase 2.